The primary structure comprises 164 residues: Protein LIGHT-DEPENDENT SHORT HYPOCOTYLS 8 (164 aa).

The 128-residue stretch at 23 to 150 folds into the ALOG domain; that stretch reads RYESQKSRDW…ARGVLYKKKK (128 aa). A Nuclear localization signal motif is present at residues 148–152; it reads KKKRL.

The protein belongs to the plant homeotic and developmental regulators ALOG protein family.

Its subcellular location is the nucleus. Probable transcription regulator that acts as a developmental regulator by promoting cell growth in response to light. This Arabidopsis thaliana (Mouse-ear cress) protein is Protein LIGHT-DEPENDENT SHORT HYPOCOTYLS 8 (LSH8).